We begin with the raw amino-acid sequence, 461 residues long: ATP synthase subunit beta (461 aa).

Position 149 to 156 (149 to 156 (GGAGVGKT)) interacts with ATP.

Belongs to the ATPase alpha/beta chains family. As to quaternary structure, F-type ATPases have 2 components, CF(1) - the catalytic core - and CF(0) - the membrane proton channel. CF(1) has five subunits: alpha(3), beta(3), gamma(1), delta(1), epsilon(1). CF(0) has three main subunits: a(1), b(2) and c(9-12). The alpha and beta chains form an alternating ring which encloses part of the gamma chain. CF(1) is attached to CF(0) by a central stalk formed by the gamma and epsilon chains, while a peripheral stalk is formed by the delta and b chains.

It is found in the cell membrane. It catalyses the reaction ATP + H2O + 4 H(+)(in) = ADP + phosphate + 5 H(+)(out). Its function is as follows. Produces ATP from ADP in the presence of a proton gradient across the membrane. The catalytic sites are hosted primarily by the beta subunits. The chain is ATP synthase subunit beta from Caldanaerobacter subterraneus subsp. tengcongensis (strain DSM 15242 / JCM 11007 / NBRC 100824 / MB4) (Thermoanaerobacter tengcongensis).